A 406-amino-acid polypeptide reads, in one-letter code: Cysteine--tRNA ligase (406 aa).

Zn(2+) is bound at residue cysteine 16. The short motif at proline 18 to asparagine 28 is the 'HIGH' region element. Zn(2+) is bound by residues cysteine 192, histidine 218, and glutamate 222. A 'KMSKS' region motif is present at residues lysine 250–serine 254. Residue lysine 253 coordinates ATP.

The protein belongs to the class-I aminoacyl-tRNA synthetase family. Monomer. Zn(2+) serves as cofactor.

It localises to the cytoplasm. It catalyses the reaction tRNA(Cys) + L-cysteine + ATP = L-cysteinyl-tRNA(Cys) + AMP + diphosphate. This chain is Cysteine--tRNA ligase, found in Mesomycoplasma hyopneumoniae (strain J / ATCC 25934 / NCTC 10110) (Mycoplasma hyopneumoniae).